Consider the following 147-residue polypeptide: Hemoglobin subunit epsilon (147 aa).

The region spanning 3–147 (HFTAEEKAAI…VAIALGHKYH (145 aa)) is the Globin domain. 2 positions are modified to phosphoserine: Ser-14 and Ser-51. Positions 64 and 93 each coordinate heme b.

Belongs to the globin family. In terms of assembly, heterotetramer of two alpha chains and two epsilon chains in early embryonic hemoglobin Gower-2; two zeta chains and two epsilon chains in early embryonic hemoglobin Gower-1. In terms of tissue distribution, red blood cells.

In terms of biological role, the epsilon chain is a beta-type chain of early mammalian embryonic hemoglobin. The protein is Hemoglobin subunit epsilon (HBE1) of Callithrix jacchus (White-tufted-ear marmoset).